The sequence spans 1272 residues: Fused isobutyryl-CoA mutase (1272 aa).

In terms of domain architecture, B12-binding spans 20 to 158; that stretch reads RLRFVTAAAL…ARCAEGARAA (139 aa). His-33 serves as a coordination point for adenosylcob(III)alamin. The GTPase chaperone MeaI stretch occupies residues 163–536; that stretch reads ESQVGAWAAE…YRHVAEALRK (374 aa). Residues 193-240 form a disordered region; sequence GAVARNPSSEASRVAAAGRGDHLDRGVRAASTADTADTANTANTANTA. Residues 221–240 show a composition bias toward low complexity; that stretch reads AASTADTADTANTANTANTA. 334 to 339 contributes to the GTP binding site; that stretch reads GAGKSS. The Mg(2+) site is built by Ser-338, Ile-363, Asp-364, and Asp-377. Arg-380 contacts GTP. Glu-429 and Thr-430 together coordinate Mg(2+). Position 476–479 (476–479) interacts with GTP; that stretch reads NKFD. The segment at 537 to 758 is linker; that stretch reads HGLRSGGGRL…MLDNLPGYFP (222 aa). 2 stretches are compositionally biased toward low complexity: residues 614–631 and 639–663; these read TVAT…KANA and ANAS…ATPT. A disordered region spans residues 614-667; the sequence is TVATSASPGASASSKANACTSTSSKANASPGANTTANSNASATSGTATPTDALN. Positions 766, 801, 907, 951, 1000, 1035, and 1040 each coordinate substrate. GTP is bound by residues Glu-1152 and Asn-1271.

This sequence belongs to the IcmF family. As to quaternary structure, homodimer. Adenosylcob(III)alamin serves as cofactor. It depends on Mg(2+) as a cofactor.

It catalyses the reaction 2-methylpropanoyl-CoA = butanoyl-CoA. The catalysed reaction is GTP + H2O = GDP + phosphate + H(+). Catalyzes the reversible interconversion of isobutyryl-CoA and n-butyryl-CoA, using radical chemistry. Also exhibits GTPase activity, associated with its G-protein domain (MeaI) that functions as a chaperone that assists cofactor delivery and proper holo-enzyme assembly. Does not exhibit methylmalonyl-CoA mutase (MCM) activity. This chain is Fused isobutyryl-CoA mutase, found in Paraburkholderia xenovorans (strain LB400).